The chain runs to 43 residues: Oxygen-evolving enhancer protein 2 (43 aa).

It belongs to the PsbP family.

It localises to the plastid. The protein localises to the chloroplast thylakoid membrane. Functionally, may be involved in the regulation of photosystem II. In Physcomitrium patens (Spreading-leaved earth moss), this protein is Oxygen-evolving enhancer protein 2.